We begin with the raw amino-acid sequence, 118 residues long: V-type proton ATPase subunit G 2 (118 aa).

Residues 25 to 90 are disordered; sequence ARKRKARRLK…VQGMQSSQQR (66 aa). Basic and acidic residues predominate over residues 35 to 56; the sequence is QAKEEAQMEVEQYRREREHEFQ. 2 stretches are compositionally biased toward polar residues: residues 57-69 and 78-89; these read SKQQAAMGSQGNL and RRQVQGMQSSQQ.

Belongs to the V-ATPase G subunit family. As to quaternary structure, V-ATPase is a heteromultimeric enzyme made up of two complexes: the ATP-hydrolytic V1 complex and the proton translocation V0 complex. The V1 complex consists of three catalytic AB heterodimers that form a heterohexamer, three peripheral stalks each consisting of EG heterodimers, one central rotor including subunits D and F, and the regulatory subunits C and H. The proton translocation complex V0 consists of the proton transport subunit a, a ring of proteolipid subunits c9c'', rotary subunit d, subunits e and f, and the accessory subunits ATP6AP1/Ac45 and ATP6AP2/PRR. Brain.

It is found in the melanosome. Its subcellular location is the cytoplasmic vesicle. The protein localises to the clathrin-coated vesicle membrane. In terms of biological role, subunit of the V1 complex of vacuolar(H+)-ATPase (V-ATPase), a multisubunit enzyme composed of a peripheral complex (V1) that hydrolyzes ATP and a membrane integral complex (V0) that translocates protons. V-ATPase is responsible for acidifying and maintaining the pH of intracellular compartments and in some cell types, is targeted to the plasma membrane, where it is responsible for acidifying the extracellular environment. This chain is V-type proton ATPase subunit G 2 (ATP6V1G2), found in Homo sapiens (Human).